Reading from the N-terminus, the 455-residue chain is Venom prothrombin activator nigrarin-D (455 aa).

The first 20 residues, 1–20, serve as a signal peptide directing secretion; it reads MAPPLLLCLILTFLWNLPEA. A propeptide spanning residues 21 to 40 is cleaved from the precursor; it reads ESNVFLKSKVANRFLQRTKR. Residues 41–86 form the Gla domain; it reads SNSIFEEFKAGNIERECIEEKCSKEEAREVFEDNEKTETFWNVYVD. 4-carboxyglutamate occurs at positions 46, 47, 54, 56, 59, 60, 65, 66, 69, 72, and 75. A disulfide bond links Cys57 and Cys62. Positions 86–122 constitute an EGF-like 1; calcium-binding domain; it reads DGDQCSSNPCHYRGTCKDGIGSYTCTCLPNYEGKNCE. 11 cysteine pairs are disulfide-bonded: Cys90–Cys101, Cys95–Cys110, Cys112–Cys121, Cys129–Cys140, Cys136–Cys149, Cys151–Cys164, Cys172–Cys328, Cys216–Cys221, Cys236–Cys252, Cys376–Cys390, and Cys401–Cys429. Ser92 carries an O-linked (Hex...) serine glycan. Residues 129–164 enclose the EGF-like 2 domain; that stretch reads CRVFNGNCWHFCKSVQNEIQCSCAESYRLGDDGHSC. Residues 182 to 209 constitute a propeptide, activation peptide; sequence REASLPDFVQSQKAILLKKSDNPSPDIR. Residues 210–453 enclose the Peptidase S1 domain; sequence IINGMDCKLG…FIPWIKAIMS (244 aa). His251 serves as the catalytic Charge relay system. Asn254 carries N-linked (GlcNAc...) asparagine glycosylation. The active-site Charge relay system is Asp308. Ser405 serves as the catalytic Charge relay system.

Belongs to the peptidase S1 family. Snake venom subfamily. As to quaternary structure, heterodimer of a light chain and a heavy chain; disulfide-linked. The vitamin K-dependent, enzymatic carboxylation of some glutamate residues allows the modified protein to bind calcium. In terms of tissue distribution, expressed by the venom gland.

Its subcellular location is the secreted. It carries out the reaction Selective cleavage of Arg-|-Thr and then Arg-|-Ile bonds in prothrombin to form thrombin.. Its function is as follows. Snake prothrombin activator that attacks the hemostatic system of prey. This protein is functionally similar to blood coagulation factor Xa. The sequence is that of Venom prothrombin activator nigrarin-D from Cryptophis nigrescens (Eastern small-eyed snake).